Reading from the N-terminus, the 848-residue chain is Neurofilament medium polypeptide (848 aa).

The segment covering Met1 to Asn10 has biased composition (polar residues). The disordered stretch occupies residues Met1–Ser51. N-acetylserine is present on Ser2. Residues Ser2–Gln102 are head. Residues Arg21–Ser44 are compositionally biased toward low complexity. At Ser30 the chain carries Phosphoserine. Arg42 carries the omega-N-methylarginine modification. O-linked (GlcNAc) threonine glycosylation is present at Thr47. The residue at position 97 (Ser97) is a Phosphoserine. The region spanning Glu99–Phe410 is the IF rod domain. The interval Leu103 to Leu134 is coil 1A. Positions Arg135–Ala147 are linker 1. The tract at residues Tyr148 to Gln246 is coil 1B. Ser224 carries the post-translational modification Phosphoserine. The segment at Ile247 to Asp263 is linker 12. The interval Ile264–Gln285 is coil 2A. Residues Ala286–Trp289 form a linker 2 region. Positions Phe290–Phe410 are coil 2B. Tyr318 is subject to Phosphotyrosine. 3 positions are modified to phosphoserine: Ser344, Ser416, and Ser428. Residues Ser411–Asp848 form a tail region. Thr430 is a glycosylation site (O-linked (GlcNAc) threonine). Residues Ser466 and Ser482 each carry the phosphoserine modification. Residues Ser482–Val785 are disordered. Residues Glu488 to Glu498 show a composition bias toward acidic residues. The segment covering Ala499 to Ala509 has biased composition (basic and acidic residues). Phosphoserine is present on residues Ser502 and Ser506. The span at Lys510 to Glu533 shows a compositional bias: acidic residues. Residues Gly534–Lys553 are compositionally biased toward basic and acidic residues. Phosphoserine occurs at positions 537, 545, 550, and 551. A compositionally biased stretch (acidic residues) spans Asp554–Ala576. Thr565 is modified (phosphothreonine). Residues Lys577 to Lys604 are compositionally biased toward basic and acidic residues. Ser605 and Ser610 each carry phosphoserine. Basic and acidic residues-rich tracts occupy residues Pro611 to Glu677 and Ser689 to Glu711. Thr642 bears the Phosphothreonine mark. Ser645, Ser669, Ser689, Ser715, Ser723, Ser753, and Ser769 each carry phosphoserine. 2 stretches are compositionally biased toward basic and acidic residues: residues Ser720–Ile732 and Thr748–Gly760. Basic and acidic residues predominate over residues Ala771 to Val785.

Belongs to the intermediate filament family. In terms of assembly, forms heterodimers with NEFL; which can further hetero-oligomerize (in vitro). Forms heterodimers with INA (in vitro). In terms of processing, there are a number of repeats of the tripeptide K-S-P, NFM is phosphorylated on a number of the serines in this motif. It is thought that phosphorylation of NFM results in the formation of interfilament cross bridges that are important in the maintenance of axonal caliber. Post-translationally, phosphorylation seems to play a major role in the functioning of the larger neurofilament polypeptides (NF-M and NF-H), the levels of phosphorylation being altered developmentally and coincidentally with a change in the neurofilament function. Phosphorylated in the head and rod regions by the PKC kinase PKN1, leading to the inhibition of polymerization. As to expression, expressed in the sciatic nerve (at protein level).

It is found in the cytoplasm. The protein localises to the cytoskeleton. The protein resides in the cell projection. Its subcellular location is the axon. Neurofilaments usually contain three intermediate filament proteins: NEFL, NEFM, and NEFH which are involved in the maintenance of neuronal caliber. May additionally cooperate with the neuronal intermediate filament proteins PRPH and INA to form neuronal filamentous networks. The protein is Neurofilament medium polypeptide (Nefm) of Mus musculus (Mouse).